A 537-amino-acid polypeptide reads, in one-letter code: Phosphoenolpyruvate carboxykinase (ATP) (537 aa).

Substrate-binding residues include R61, Y194, and K200. ATP is bound by residues K200, H219, and G235–T243. The Mn(2+) site is built by K200 and H219. D256 lines the Mn(2+) pocket. Residues E284, R322, and T448 each coordinate ATP. R322 is a substrate binding site.

It belongs to the phosphoenolpyruvate carboxykinase (ATP) family. Requires Mn(2+) as cofactor.

The protein localises to the cytoplasm. It carries out the reaction oxaloacetate + ATP = phosphoenolpyruvate + ADP + CO2. It participates in carbohydrate biosynthesis; gluconeogenesis. Its function is as follows. Involved in the gluconeogenesis. Catalyzes the conversion of oxaloacetate (OAA) to phosphoenolpyruvate (PEP) through direct phosphoryl transfer between the nucleoside triphosphate and OAA. The polypeptide is Phosphoenolpyruvate carboxykinase (ATP) (Bradyrhizobium sp. (strain BTAi1 / ATCC BAA-1182)).